A 190-amino-acid chain; its full sequence is Fe/S biogenesis protein NfuA (190 aa).

2 residues coordinate [4Fe-4S] cluster: Cys-148 and Cys-151.

The protein belongs to the NfuA family. Homodimer. [4Fe-4S] cluster is required as a cofactor.

In terms of biological role, involved in iron-sulfur cluster biogenesis. Binds a 4Fe-4S cluster, can transfer this cluster to apoproteins, and thereby intervenes in the maturation of Fe/S proteins. Could also act as a scaffold/chaperone for damaged Fe/S proteins. This chain is Fe/S biogenesis protein NfuA, found in Baumannia cicadellinicola subsp. Homalodisca coagulata.